We begin with the raw amino-acid sequence, 212 residues long: Protein HP-25 homolog 1 (212 aa).

The N-terminal stretch at 1-34 (MPGGRRRVGSMNIAGFWILAQFVLLLVANVKSSA) is a signal peptide. The tract at residues 36–66 (SELCGPRGARGPPGLSGLPGPPGYTGPIGMP) is disordered. Residues 40 to 53 (GPRGARGPPGLSGL) are compositionally biased toward low complexity. Residues 40–76 (GPRGARGPPGLSGLPGPPGYTGPIGMPGLTGRPGLPG) form the Collagen-like domain. In terms of domain architecture, C1q spans 82–212 (PPLPQSAFSV…VFYGFLLNGN (131 aa)). Asn-125 is a glycosylation site (N-linked (GlcNAc...) asparagine).

It is found in the secreted. This Bos taurus (Bovine) protein is Protein HP-25 homolog 1.